Here is a 171-residue protein sequence, read N- to C-terminus: Probable deoxyuridine 5'-triphosphate nucleotidohydrolase (171 aa).

Belongs to the dCTP deaminase family. Archaeal dUTPase subfamily.

The enzyme catalyses dUTP + H2O = dUMP + diphosphate + H(+). It functions in the pathway pyrimidine metabolism; dUMP biosynthesis; dUMP from dCTP (dUTP route): step 2/2. This enzyme is involved in nucleotide metabolism: it produces dUMP, the immediate precursor of thymidine nucleotides and it decreases the intracellular concentration of dUTP so that uracil cannot be incorporated into DNA. The chain is Probable deoxyuridine 5'-triphosphate nucleotidohydrolase from Methanosarcina acetivorans (strain ATCC 35395 / DSM 2834 / JCM 12185 / C2A).